The sequence spans 575 residues: Carboxylesterase 5A (575 aa).

An N-terminal signal peptide occupies residues 1–28 (MSGDWVRPGQALIWVIWIFGAIIEGSVT). Cys94 and Cys121 form a disulfide bridge. N-linked (GlcNAc...) asparagine glycosylation occurs at Asn134. The active-site Acyl-ester intermediate is Ser226. A disulfide bridge links Cys280 with Cys291. Residue Asn281 is glycosylated (N-linked (GlcNAc...) asparagine). Glu345 acts as the Charge relay system in catalysis. Asn363 carries an N-linked (GlcNAc...) asparagine glycan. His454 serves as the catalytic Charge relay system. Asn524 is a glycosylation site (N-linked (GlcNAc...) asparagine).

The protein belongs to the type-B carboxylesterase/lipase family. Post-translationally, N-glycosylated.

The protein localises to the secreted. It catalyses the reaction a carboxylic ester + H2O = an alcohol + a carboxylate + H(+). Involved in the detoxification of xenobiotics and in the activation of ester and amide prodrugs. This chain is Carboxylesterase 5A (Ces5a), found in Mus musculus (Mouse).